Reading from the N-terminus, the 179-residue chain is Large ribosomal subunit protein uL6 (179 aa).

This sequence belongs to the universal ribosomal protein uL6 family. In terms of assembly, part of the 50S ribosomal subunit.

Functionally, this protein binds to the 23S rRNA, and is important in its secondary structure. It is located near the subunit interface in the base of the L7/L12 stalk, and near the tRNA binding site of the peptidyltransferase center. This Gemmatimonas aurantiaca (strain DSM 14586 / JCM 11422 / NBRC 100505 / T-27) protein is Large ribosomal subunit protein uL6.